A 334-amino-acid polypeptide reads, in one-letter code: MDNSAQKNERTGKHPRRASEVQKGFTAAYPTQSSIPFKSQASVIPESEKKGFNSQAKRFPHKKNDIPGPGFYNVIHQSPVSNSVSLSKKGTCMFPSMCARLDTIISKYPAANAYTIPSDFISKRDFSNSCSSMFQLPSFMKALKFETPAPNYYNASVSCCKQRNNVCTRAGFMSKTQRGSFAFADKGPPPGHYDINESLVKQSPNTLMSCFKSKTNRGLKLTSTGPGPGYYNPSDCTKVPKKTLFPKNPILNFSAQPSPLPPKPPFPGPGQYEIVDYLGPRKHFISSASFVSNTSRWTAAPPQPGLPGPATYKPELPGKQSFLYNEDKKWIPVL.

A disordered region spans residues 1-60; the sequence is MDNSAQKNERTGKHPRRASEVQKGFTAAYPTQSSIPFKSQASVIPESEKKGFNSQAKRFP. Residues 7–20 are compositionally biased toward basic and acidic residues; that stretch reads KNERTGKHPRRASE. Residues 29–42 show a composition bias toward polar residues; it reads YPTQSSIPFKSQAS. STPGR repeat units lie at residues 67–74, 109–117, 148–155, 187–206, 225–257, 267–282, and 306–316; these read PGPGFYNV, PAANAYTIP, PAPNYYNA, GPPPGHYDINESLVKQSPNT, GPGPGYYNPSDCTKVPKKTLFPKNPILNFSAQP, PGPGQYEIVDYLGPRK, and LPGPATYKPEL. Tyr72 is modified (phosphotyrosine).

This sequence belongs to the STPG1 family.

The protein resides in the cytoplasm. Its subcellular location is the nucleus. Its function is as follows. May positively contribute to the induction of apoptosis triggered by O(6)-methylguanine. The chain is O(6)-methylguanine-induced apoptosis 2 (STPG1) from Homo sapiens (Human).